Consider the following 259-residue polypeptide: Succinate dehydrogenase iron-sulfur subunit (259 aa).

Positions Arg28 to Met119 constitute a 2Fe-2S ferredoxin-type domain. [2Fe-2S] cluster contacts are provided by Cys80, Cys85, and Cys100. A 4Fe-4S ferredoxin-type domain is found at Asp160 to Tyr190. 3 residues coordinate [4Fe-4S] cluster: Cys170, Cys173, and Cys176. [3Fe-4S] cluster is bound at residue Cys180. Trp185 is an a ubiquinone binding site. Positions 227 and 233 each coordinate [3Fe-4S] cluster. Cys237 serves as a coordination point for [4Fe-4S] cluster.

It belongs to the succinate dehydrogenase/fumarate reductase iron-sulfur protein family. As to quaternary structure, part of an enzyme complex containing four subunits: a flavoprotein, an iron-sulfur, cytochrome b-556, and a hydrophobic anchor protein. [2Fe-2S] cluster serves as cofactor. The cofactor is [3Fe-4S] cluster. [4Fe-4S] cluster is required as a cofactor.

It carries out the reaction a quinone + succinate = fumarate + a quinol. It functions in the pathway carbohydrate metabolism; tricarboxylic acid cycle; fumarate from succinate (bacterial route): step 1/1. The chain is Succinate dehydrogenase iron-sulfur subunit (sdhB) from Paracoccus denitrificans.